A 401-amino-acid chain; its full sequence is L-rhamnonate dehydratase (401 aa).

Substrate contacts are provided by His29 and Arg55. The Mg(2+) site is built by Asp222, Glu248, and Glu276. His325 functions as the Proton acceptor in the catalytic mechanism. Glu345 lines the substrate pocket.

It belongs to the mandelate racemase/muconate lactonizing enzyme family. RhamD subfamily. Homooctamer; tetramer of dimers. Mg(2+) serves as cofactor.

It carries out the reaction L-rhamnonate = 2-dehydro-3-deoxy-L-rhamnonate + H2O. Catalyzes the dehydration of L-rhamnonate to 2-keto-3-deoxy-L-rhamnonate (KDR). This Klebsiella pneumoniae (strain 342) protein is L-rhamnonate dehydratase.